The chain runs to 127 residues: Small ribosomal subunit protein uS13 (127 aa).

The segment at 90-127 is disordered; it reads KRHREGLPVNGQRTRTNARTRKGKRKTVAGRSQSTQKK. Positions 105–117 are enriched in basic residues; that stretch reads TNARTRKGKRKTV.

It belongs to the universal ribosomal protein uS13 family. In terms of assembly, part of the 30S ribosomal subunit. Forms a loose heterodimer with protein S19. Forms two bridges to the 50S subunit in the 70S ribosome.

Its function is as follows. Located at the top of the head of the 30S subunit, it contacts several helices of the 16S rRNA. In the 70S ribosome it contacts the 23S rRNA (bridge B1a) and protein L5 of the 50S subunit (bridge B1b), connecting the 2 subunits; these bridges are implicated in subunit movement. Contacts the tRNAs in the A and P-sites. This Salinibacter ruber (strain DSM 13855 / M31) protein is Small ribosomal subunit protein uS13.